Here is a 128-residue protein sequence, read N- to C-terminus: Large ribosomal subunit protein bL17 (128 aa).

Belongs to the bacterial ribosomal protein bL17 family. In terms of assembly, part of the 50S ribosomal subunit. Contacts protein L32.

The chain is Large ribosomal subunit protein bL17 from Proteus mirabilis (strain HI4320).